The chain runs to 101 residues: Small ribosomal subunit protein uS14A (101 aa).

Positions 31–69 (IAAPGSSPEERAAAQQELRRQPRDASATRLRNRDAVDGR) are disordered. The segment covering 38–53 (PEERAAAQQELRRQPR) has biased composition (basic and acidic residues).

This sequence belongs to the universal ribosomal protein uS14 family. In terms of assembly, part of the 30S ribosomal subunit. Contacts proteins S3 and S10.

Functionally, binds 16S rRNA, required for the assembly of 30S particles and may also be responsible for determining the conformation of the 16S rRNA at the A site. This is Small ribosomal subunit protein uS14A from Saccharopolyspora erythraea (strain ATCC 11635 / DSM 40517 / JCM 4748 / NBRC 13426 / NCIMB 8594 / NRRL 2338).